A 652-amino-acid polypeptide reads, in one-letter code: Ethylmalonyl-CoA mutase (652 aa).

The 129-residue stretch at proline 519–threonine 647 folds into the B12-binding domain. An adenosylcob(III)alamin-binding site is contributed by histidine 532.

The protein belongs to the methylmalonyl-CoA mutase family. In terms of assembly, homodimer. Adenosylcob(III)alamin is required as a cofactor.

The enzyme catalyses (2R)-ethylmalonyl-CoA = (2S)-methylsuccinyl-CoA. Functionally, radical enzyme that catalyzes the transformation of (2R)-ethylmalonyl-CoA to (2S)-methylsuccinyl-CoA. Is involved in the ethylmalonyl-CoA pathway for acetyl-CoA assimilation required for R.sphaeroides growth on acetate as sole carbon source. Is highly specific for its substrate, ethylmalonyl-CoA, and accepts methylmalonyl-CoA only at 0.2% relative activity. The protein is Ethylmalonyl-CoA mutase of Cereibacter sphaeroides (strain ATCC 17023 / DSM 158 / JCM 6121 / CCUG 31486 / LMG 2827 / NBRC 12203 / NCIMB 8253 / ATH 2.4.1.) (Rhodobacter sphaeroides).